Here is a 777-residue protein sequence, read N- to C-terminus: Glucocorticoid receptor (777 aa).

Positions 1 to 14 (MDSKESLTPGKEEN) are enriched in basic and acidic residues. The tract at residues 1–22 (MDSKESLTPGKEENPSSVLTQE) is disordered. The tract at residues 1-420 (MDSKESLTPG…TATTGPPPKL (420 aa)) is modulating. At threonine 8 the chain carries Phosphothreonine. Omega-N-methylarginine is present on arginine 23. A phosphoserine mark is found at serine 45, serine 113, serine 134, and serine 141. The tract at residues 130-183 (NRSTSVPENPKSSASSSVSAAPKEKEFPKTHSDVSSEQQNLKGQTGTNGGNAKL) is disordered. Residues 134-150 (SVPENPKSSASSSVSAA) are compositionally biased toward low complexity. Basic and acidic residues predominate over residues 151-163 (PKEKEFPKTHSDV). The segment covering 164 to 174 (SSEQQNLKGQT) has biased composition (polar residues). Residues serine 203, serine 211, and serine 226 each carry the phosphoserine modification. Residue lysine 258 forms a Glycyl lysine isopeptide (Lys-Gly) (interchain with G-Cter in SUMO2) linkage. Serine 267 is subject to Phosphoserine. Residues lysine 277 and lysine 293 each participate in a glycyl lysine isopeptide (Lys-Gly) (interchain with G-Cter in SUMO); alternate cross-link. Glycyl lysine isopeptide (Lys-Gly) (interchain with G-Cter in SUMO2); alternate cross-links involve residues lysine 277 and lysine 293. The segment covering 394-414 (SSPSMRPDVSSPPSSSSTATT) has biased composition (low complexity). The disordered stretch occupies residues 394-415 (SSPSMRPDVSSPPSSSSTATTG). At serine 404 the chain carries Phosphoserine. Lysine 419 participates in a covalent cross-link: Glycyl lysine isopeptide (Lys-Gly) (interchain with G-Cter in ubiquitin). 2 consecutive NR C4-type zinc fingers follow at residues 421–441 (CLVCSDEASGCHYGVLTCGSC) and 457–481 (CAGRNDCIIDKIRRKNCPACRYRKC). The nuclear receptor DNA-binding region spans 421-486 (CLVCSDEASG…RYRKCLQAGM (66 aa)). Lysine 480, lysine 492, lysine 494, and lysine 495 each carry N6-acetyllysine. Positions 485 to 777 (GMNLEARKTK…NIRKLLFHQK (293 aa)) are interaction with CLOCK. The tract at residues 487 to 523 (NLEARKTKKKIKGIQQATTGVSQETSENPANKTIVPA) is hinge. An NR LBD domain is found at 524–758 (TLPQLTPTLV…FPEMLAEIIT (235 aa)). The interaction with CRY1 stretch occupies residues 532-697 (LVSLLEVIEP…EIRMTYIKEL (166 aa)). Residue lysine 703 forms a Glycyl lysine isopeptide (Lys-Gly) (interchain with G-Cter in SUMO) linkage.

The protein belongs to the nuclear hormone receptor family. NR3 subfamily. Heteromultimeric cytoplasmic complex with HSP90AA1, HSPA1A/HSPA1B, and FKBP5 or another immunophilin such as PPID, STIP1, or the immunophilin homolog PPP5C. Upon ligand binding FKBP5 dissociates from the complex and FKBP4 takes its place, thereby linking the complex to dynein and mediating transport to the nucleus, where the complex dissociates. Probably forms a complex composed of chaperones HSP90 and HSP70, co-chaperones CDC37, PPP5C, TSC1 and client protein TSC2, CDK4, AKT, RAF1 and NR3C1; this complex does not contain co-chaperones STIP1/HOP and PTGES3/p23. Directly interacts with UNC45A. Binds to DNA as a homodimer, and as heterodimer with NR3C2 or the retinoid X receptor. Binds STAT5A and STAT5B homodimers and heterodimers. Interacts with NRIP1, POU2F1, POU2F2 and TRIM28. Interacts with several coactivator complexes, including the SMARCA4 complex, CREBBP/EP300, TADA2L (Ada complex) and p160 coactivators such as NCOA2 and NCOA6. Interaction with BAG1 inhibits transactivation. Interacts with HEXIM1 and TGFB1I1. Interacts with NCOA1. Interacts with NCOA3, SMARCA4, SMARCC1, SMARCD1, and SMARCE1. Interacts with CLOCK, CRY1 and CRY2 in a ligand-dependent fashion. Interacts with CIART. Interacts with RWDD3. Interacts with UBE2I/UBC9 and this interaction is enhanced in the presence of RWDD3. Interacts with GRIP1. Interacts with NR4A3 (via nuclear receptor DNA-binding domain), represses transcription activity of NR4A3 on the POMC promoter Nur response element (NurRE). Directly interacts with PNRC2 to attract and form a complex with UPF1 and DCP1A; the interaction leads to rapid mRNA degradation. Interacts with GSK3B. Interacts with FNIP1 and FNIP2. Interacts (via C-terminus) with HNRNPU (via C-terminus). Interacts with MCM3AP. Interacts (via domain NR LBD) with HSP90AA1 and HSP90AB1. In the absence of hormonal ligand, interacts with TACC1. Interacts (via NR LBD domain) with ZNF764 (via KRAB domain); the interaction regulates transcription factor activity of NR3C1 by directing its actions toward certain biologic pathways. Post-translationally, acetylation by CLOCK reduces its binding to glucocorticoid response elements and its transcriptional activity. Increased proteasome-mediated degradation in response to glucocorticoids. In terms of processing, phosphorylated in the absence of hormone; becomes hyperphosphorylated in the presence of glucocorticoid. The Ser-203, Ser-226 and Ser-404-phosphorylated forms are mainly cytoplasmic, and the Ser-211-phosphorylated form is nuclear. Phosphorylation at Ser-211 increases transcriptional activity. Phosphorylation at Ser-203, Ser-226 and Ser-404 decreases signaling capacity. Phosphorylation at Ser-404 may protect from glucocorticoid-induced apoptosis. Phosphorylation at Ser-203 and Ser-211 is not required in regulation of chromosome segregation. May be dephosphorylated by PPP5C, attenuates NR3C1 action. Post-translationally, ubiquitinated by UBR5, leading to its degradation: UBR5 specifically recognizes and binds ligand-bound NR3C1 when it is not associated with coactivators (NCOAs). In presence of NCOAs, the UBR5-degron is not accessible, preventing its ubiquitination and degradation. Sumoylation at Lys-277 and Lys-293 negatively regulates its transcriptional activity. Sumoylation at Lys-703 positively regulates its transcriptional activity in the presence of RWDD3. Sumoylation at Lys-277 and Lys-293 is dispensable whereas sumoylation at Lys-703 is critical for the stimulatory effect of RWDD3 on its transcriptional activity. Heat shock increases sumoylation in a RWDD3-dependent manner.

It is found in the cytoplasm. The protein localises to the nucleus. Its subcellular location is the mitochondrion. It localises to the cytoskeleton. The protein resides in the spindle. It is found in the microtubule organizing center. The protein localises to the centrosome. Its subcellular location is the chromosome. It localises to the nucleoplasm. In terms of biological role, receptor for glucocorticoids (GC). Has a dual mode of action: as a transcription factor that binds to glucocorticoid response elements (GRE), both for nuclear and mitochondrial DNA, and as a modulator of other transcription factors. Affects inflammatory responses, cellular proliferation and differentiation in target tissues. Involved in chromatin remodeling. Plays a role in rapid mRNA degradation by binding to the 5' UTR of target mRNAs and interacting with PNRC2 in a ligand-dependent manner which recruits the RNA helicase UPF1 and the mRNA-decapping enzyme DCP1A, leading to RNA decay. Could act as a coactivator for STAT5-dependent transcription upon growth hormone (GH) stimulation and could reveal an essential role of hepatic GR in the control of body growth. Mediates glucocorticoid-induced apoptosis. Promotes accurate chromosome segregation during mitosis. May act as a tumor suppressor. May play a negative role in adipogenesis through the regulation of lipolytic and antilipogenic gene expression. The sequence is that of Glucocorticoid receptor (NR3C1) from Saguinus oedipus (Cotton-top tamarin).